A 71-amino-acid chain; its full sequence is Protein KleB (71 aa).

Positions 9 to 28 (VTTNCRRCGKSISTLSRSLI) form a DNA-binding region, H-T-H motif.

The chain is Protein KleB (kleB) from Escherichia coli.